We begin with the raw amino-acid sequence, 159 residues long: uncharacterized protein (159 aa).

Residues 1 to 13 (MESRPSGRQHASE) show a composition bias toward basic and acidic residues. The tract at residues 1-35 (MESRPSGRQHASEGDGDQSPTQCAGMRSSGRSDQP) is disordered.

This is an uncharacterized protein from Homo sapiens (Human).